A 367-amino-acid polypeptide reads, in one-letter code: Probable cinnamyl alcohol dehydrogenase (367 aa).

Cys47 serves as a coordination point for Zn(2+). Position 49 (Thr49) interacts with NADP(+). His69, Glu70, Cys100, Cys103, Cys106, Cys114, and Cys163 together coordinate Zn(2+). NADP(+) is bound by residues Thr167, 188 to 193, 211 to 216, Thr251, Gly275, and 298 to 300; these read GLGGVG, SSSSKK, and SFI.

It belongs to the zinc-containing alcohol dehydrogenase family. As to quaternary structure, homodimer. Zn(2+) is required as a cofactor.

The enzyme catalyses (E)-cinnamyl alcohol + NADP(+) = (E)-cinnamaldehyde + NADPH + H(+). It carries out the reaction (E)-coniferol + NADP(+) = (E)-coniferaldehyde + NADPH + H(+). It catalyses the reaction (E)-sinapyl alcohol + NADP(+) = (E)-sinapaldehyde + NADPH + H(+). The catalysed reaction is (E)-4-coumaroyl alcohol + NADP(+) = (E)-4-coumaraldehyde + NADPH + H(+). The enzyme catalyses (E)-caffeyl alcohol + NADP(+) = (E)-caffeyl aldehyde + NADPH + H(+). Its pathway is aromatic compound metabolism; phenylpropanoid biosynthesis. In terms of biological role, involved in lignin biosynthesis. May catalyze the final step specific for the production of lignin monomers, like coniferyl alcohol, sinapyl alcohol and 4-coumaryl alcohol. The polypeptide is Probable cinnamyl alcohol dehydrogenase (Zea mays (Maize)).